The chain runs to 363 residues: 3-ketodihydrosphingosine reductase TSC10 (363 aa).

Position 10 (Leu10) interacts with NADP(+). NADPH is bound by residues Gly13, Ser15, and Gly17. The short motif at 13–17 is the GXSXG element; it reads GGSQG. Leu18 lines the NADP(+) pocket. The NADPH site is built by Arg40, Lys44, Asp131, and Leu132. Residue Asp131 coordinates NADP(+). The active-site Proton donor is Ser206. NADP(+) is bound by residues Tyr220, Lys224, and Ser253. Tyr220 acts as the Proton acceptor in catalysis. Catalysis depends on Lys224, which acts as the Lowers pKa of active site Tyr. The helical transmembrane segment at 324–344 threads the bilayer; that stretch reads FVQWLIGVIANLLVVPFYMVL.

Belongs to the short-chain dehydrogenases/reductases (SDR) family.

It localises to the endoplasmic reticulum membrane. The enzyme catalyses sphinganine + NADP(+) = 3-oxosphinganine + NADPH + H(+). Its pathway is lipid metabolism; sphingolipid metabolism. In terms of biological role, catalyzes the reduction of 3'-oxosphinganine (3-ketodihydrosphingosine/KDS) to sphinganine (dihydrosphingosine/DHS), the second step of de novo sphingolipid biosynthesis. This chain is 3-ketodihydrosphingosine reductase TSC10 (TSC10), found in Candida glabrata (strain ATCC 2001 / BCRC 20586 / JCM 3761 / NBRC 0622 / NRRL Y-65 / CBS 138) (Yeast).